A 486-amino-acid polypeptide reads, in one-letter code: Protein nucleotidyltransferase YdiU (486 aa).

8 residues coordinate ATP: glycine 90, glycine 92, arginine 93, lysine 113, aspartate 125, glycine 126, arginine 176, and arginine 183. The active-site Proton acceptor is aspartate 252. Mg(2+) is bound by residues asparagine 253 and aspartate 262. Position 262 (aspartate 262) interacts with ATP.

The protein belongs to the SELO family. It depends on Mg(2+) as a cofactor. The cofactor is Mn(2+).

It catalyses the reaction L-seryl-[protein] + ATP = 3-O-(5'-adenylyl)-L-seryl-[protein] + diphosphate. It carries out the reaction L-threonyl-[protein] + ATP = 3-O-(5'-adenylyl)-L-threonyl-[protein] + diphosphate. The enzyme catalyses L-tyrosyl-[protein] + ATP = O-(5'-adenylyl)-L-tyrosyl-[protein] + diphosphate. The catalysed reaction is L-histidyl-[protein] + UTP = N(tele)-(5'-uridylyl)-L-histidyl-[protein] + diphosphate. It catalyses the reaction L-seryl-[protein] + UTP = O-(5'-uridylyl)-L-seryl-[protein] + diphosphate. It carries out the reaction L-tyrosyl-[protein] + UTP = O-(5'-uridylyl)-L-tyrosyl-[protein] + diphosphate. Nucleotidyltransferase involved in the post-translational modification of proteins. It can catalyze the addition of adenosine monophosphate (AMP) or uridine monophosphate (UMP) to a protein, resulting in modifications known as AMPylation and UMPylation. This is Protein nucleotidyltransferase YdiU from Pseudomonas aeruginosa (strain UCBPP-PA14).